A 193-amino-acid chain; its full sequence is MSVIPMVVEQTSRGERSYDIYSRLLKERVIFLSGEVEDRMANLIVAQLLFLESEDPTKDINIYINSPGGSVTAGMAIYDTMQFIKPDIRTLCIGQACSMGAFLLAGGTAGKRAALPNARVMIHQPLGGFRGQASDIQIHAQEILKIKHTLNDRLAFHTGQSIERIEKDTDRDNFMSAEEAQAYGLVDEVLVKR.

Catalysis depends on Ser98, which acts as the Nucleophile. His123 is an active-site residue.

Belongs to the peptidase S14 family. Fourteen ClpP subunits assemble into 2 heptameric rings which stack back to back to give a disk-like structure with a central cavity, resembling the structure of eukaryotic proteasomes.

It is found in the cytoplasm. It carries out the reaction Hydrolysis of proteins to small peptides in the presence of ATP and magnesium. alpha-casein is the usual test substrate. In the absence of ATP, only oligopeptides shorter than five residues are hydrolyzed (such as succinyl-Leu-Tyr-|-NHMec, and Leu-Tyr-Leu-|-Tyr-Trp, in which cleavage of the -Tyr-|-Leu- and -Tyr-|-Trp bonds also occurs).. Functionally, cleaves peptides in various proteins in a process that requires ATP hydrolysis. Has a chymotrypsin-like activity. Plays a major role in the degradation of misfolded proteins. The chain is ATP-dependent Clp protease proteolytic subunit from Haemophilus influenzae (strain PittEE).